The sequence spans 468 residues: Cysteine--tRNA ligase (468 aa).

C33 contacts Zn(2+). Positions 35–45 match the 'HIGH' region motif; the sequence is ATVQGLPHIGH. 3 residues coordinate Zn(2+): C211, H236, and E240. A 'KMSKS' region motif is present at residues 267 to 271; that stretch reads KMSKS. K270 is a binding site for ATP.

Belongs to the class-I aminoacyl-tRNA synthetase family. In terms of assembly, monomer. The cofactor is Zn(2+).

Its subcellular location is the cytoplasm. It carries out the reaction tRNA(Cys) + L-cysteine + ATP = L-cysteinyl-tRNA(Cys) + AMP + diphosphate. This chain is Cysteine--tRNA ligase, found in Mycolicibacterium paratuberculosis (strain ATCC BAA-968 / K-10) (Mycobacterium paratuberculosis).